An 890-amino-acid polypeptide reads, in one-letter code: DNA mismatch repair protein MutS (890 aa).

645-652 (GPNMAGKS) lines the ATP pocket.

The protein belongs to the DNA mismatch repair MutS family.

In terms of biological role, this protein is involved in the repair of mismatches in DNA. It is possible that it carries out the mismatch recognition step. This protein has a weak ATPase activity. This Rickettsia conorii (strain ATCC VR-613 / Malish 7) protein is DNA mismatch repair protein MutS.